A 337-amino-acid chain; its full sequence is Ribonucleoside-diphosphate reductase small subunit (337 aa).

Positions 1 to 22 (MDPAVSPASTDPLDTHASGAGA) are disordered. Residues D91, E121, and H124 each contribute to the Fe cation site. Y128 is a catalytic residue. A helical membrane pass occupies residues 177-197 (FILMILIEGVFFAASFAAIAY). Positions 184, 218, and 221 each coordinate Fe cation.

This sequence belongs to the ribonucleoside diphosphate reductase small chain family. In terms of assembly, heterotetramer composed of a homodimer of the large subunit (R1) and a homodimer of the small subunit (R2). Larger multisubunit protein complex are also active, composed of (R1)n(R2)n. Fe cation is required as a cofactor.

Its subcellular location is the host membrane. It catalyses the reaction a 2'-deoxyribonucleoside 5'-diphosphate + [thioredoxin]-disulfide + H2O = a ribonucleoside 5'-diphosphate + [thioredoxin]-dithiol. Ribonucleoside-diphosphate reductase holoenzyme provides the precursors necessary for viral DNA synthesis. Allows virus growth in non-dividing cells, as well as reactivation from latency in infected hosts. Catalyzes the biosynthesis of deoxyribonucleotides from the corresponding ribonucleotides. The sequence is that of Ribonucleoside-diphosphate reductase small subunit from Human herpesvirus 2 (strain 333) (HHV-2).